We begin with the raw amino-acid sequence, 208 residues long: Large ribosomal subunit protein uL4 (208 aa).

Residues 58–77 (RGGGRKPWRQKGTGRARQGS) form a disordered region. Residues 60–71 (GGRKPWRQKGTG) show a composition bias toward basic residues.

The protein belongs to the universal ribosomal protein uL4 family. As to quaternary structure, part of the 50S ribosomal subunit.

Its function is as follows. One of the primary rRNA binding proteins, this protein initially binds near the 5'-end of the 23S rRNA. It is important during the early stages of 50S assembly. It makes multiple contacts with different domains of the 23S rRNA in the assembled 50S subunit and ribosome. Functionally, forms part of the polypeptide exit tunnel. The chain is Large ribosomal subunit protein uL4 from Caldicellulosiruptor saccharolyticus (strain ATCC 43494 / DSM 8903 / Tp8T 6331).